A 381-amino-acid chain; its full sequence is UDP-N-acetylglucosamine--N-acetylmuramyl-(pentapeptide) pyrophosphoryl-undecaprenol N-acetylglucosamine transferase (381 aa).

Residues 10–12, N124, R165, S190, I245, and Q290 contribute to the UDP-N-acetyl-alpha-D-glucosamine site; that span reads TGG. A disordered region spans residues 361–381; sequence WGSPAGQERPGHGPVRPPDLA.

The protein belongs to the glycosyltransferase 28 family. MurG subfamily.

The protein localises to the cell inner membrane. It catalyses the reaction di-trans,octa-cis-undecaprenyl diphospho-N-acetyl-alpha-D-muramoyl-L-alanyl-D-glutamyl-meso-2,6-diaminopimeloyl-D-alanyl-D-alanine + UDP-N-acetyl-alpha-D-glucosamine = di-trans,octa-cis-undecaprenyl diphospho-[N-acetyl-alpha-D-glucosaminyl-(1-&gt;4)]-N-acetyl-alpha-D-muramoyl-L-alanyl-D-glutamyl-meso-2,6-diaminopimeloyl-D-alanyl-D-alanine + UDP + H(+). The protein operates within cell wall biogenesis; peptidoglycan biosynthesis. Cell wall formation. Catalyzes the transfer of a GlcNAc subunit on undecaprenyl-pyrophosphoryl-MurNAc-pentapeptide (lipid intermediate I) to form undecaprenyl-pyrophosphoryl-MurNAc-(pentapeptide)GlcNAc (lipid intermediate II). The polypeptide is UDP-N-acetylglucosamine--N-acetylmuramyl-(pentapeptide) pyrophosphoryl-undecaprenol N-acetylglucosamine transferase (Anaeromyxobacter sp. (strain Fw109-5)).